A 156-amino-acid polypeptide reads, in one-letter code: 6,7-dimethyl-8-ribityllumazine synthase (156 aa).

5-amino-6-(D-ribitylamino)uracil is bound by residues F23, 57–59, and 81–83; these read AYE and AII. 86–87 contributes to the (2S)-2-hydroxy-3-oxobutyl phosphate binding site; that stretch reads GT. The Proton donor role is filled by H89. F114 contributes to the 5-amino-6-(D-ribitylamino)uracil binding site. (2S)-2-hydroxy-3-oxobutyl phosphate is bound at residue R128.

It belongs to the DMRL synthase family.

It carries out the reaction (2S)-2-hydroxy-3-oxobutyl phosphate + 5-amino-6-(D-ribitylamino)uracil = 6,7-dimethyl-8-(1-D-ribityl)lumazine + phosphate + 2 H2O + H(+). The protein operates within cofactor biosynthesis; riboflavin biosynthesis; riboflavin from 2-hydroxy-3-oxobutyl phosphate and 5-amino-6-(D-ribitylamino)uracil: step 1/2. Its function is as follows. Catalyzes the formation of 6,7-dimethyl-8-ribityllumazine by condensation of 5-amino-6-(D-ribitylamino)uracil with 3,4-dihydroxy-2-butanone 4-phosphate. This is the penultimate step in the biosynthesis of riboflavin. The chain is 6,7-dimethyl-8-ribityllumazine synthase from Helicobacter pylori (strain HPAG1).